A 342-amino-acid polypeptide reads, in one-letter code: Pyridoxal 4-dehydrogenase (342 aa).

Residue aspartate 56 is part of the active site. The active-site Proton donor is tyrosine 61. Lysine 86 is a catalytic residue. Residue 245-255 participates in NADP(+) binding; it reads GVFNSGILAAP.

It belongs to the aldo/keto reductase family. In terms of assembly, homodimer.

The catalysed reaction is pyridoxal + NAD(+) = 4-pyridoxolactone + NADH + H(+). Its pathway is cofactor degradation; B6 vitamer degradation; 4-pyridoxate from pyridoxal: step 1/2. This Microbacterium luteolum (Aureobacterium luteolum) protein is Pyridoxal 4-dehydrogenase (pld1).